The sequence spans 352 residues: Ketol-acid reductoisomerase (NAD(+)) (352 aa).

Positions 11–199 constitute a KARI N-terminal Rossmann domain; sequence ENVVTSEEFT…AIGSGYLFPT (189 aa). Residues 38 to 41 and 100 to 103 contribute to the NAD(+) site; these read YGVQ and DAGQ. Histidine 124 is a catalytic residue. An NAD(+)-binding site is contributed by glycine 153. Residues 200 to 347 enclose the KARI C-terminal knotted domain; that stretch reads TFEKEVFSDL…AAVRALRPEN (148 aa). Aspartate 208, glutamate 212, glutamate 244, and glutamate 248 together coordinate Mg(2+). Position 270 (serine 270) interacts with substrate.

The protein belongs to the ketol-acid reductoisomerase family. Requires Mg(2+) as cofactor.

The enzyme catalyses (2R)-2,3-dihydroxy-3-methylbutanoate + NAD(+) = (2S)-2-acetolactate + NADH + H(+). The protein operates within amino-acid biosynthesis; L-isoleucine biosynthesis; L-isoleucine from 2-oxobutanoate: step 2/4. It functions in the pathway amino-acid biosynthesis; L-valine biosynthesis; L-valine from pyruvate: step 2/4. In terms of biological role, involved in the biosynthesis of branched-chain amino acids (BCAA). Catalyzes an alkyl-migration followed by a ketol-acid reduction of (S)-2-acetolactate (S2AL) to yield (R)-2,3-dihydroxy-isovalerate. In the isomerase reaction, S2AL is rearranged via a Mg-dependent methyl migration to produce 3-hydroxy-3-methyl-2-ketobutyrate (HMKB). In the reductase reaction, this 2-ketoacid undergoes a metal-dependent reduction by NADH to yield (R)-2,3-dihydroxy-isovalerate. The chain is Ketol-acid reductoisomerase (NAD(+)) from Desulfosudis oleivorans (strain DSM 6200 / JCM 39069 / Hxd3) (Desulfococcus oleovorans).